The sequence spans 314 residues: Inosine-uridine preferring nucleoside hydrolase (314 aa).

Asp10 is a Ca(2+) binding site. Substrate is bound at residue Asp14. Ca(2+) is bound by residues Asp15 and Thr126. The substrate site is built by Asn160, Glu166, and Asn168. His240 serves as the catalytic Proton donor. Asp241 serves as a coordination point for Ca(2+).

Belongs to the IUNH family. As to quaternary structure, homotetramer. Ca(2+) is required as a cofactor.

It catalyses the reaction inosine + H2O = hypoxanthine + D-ribose. The catalysed reaction is uridine + H2O = D-ribose + uracil. It functions in the pathway purine metabolism; purine nucleoside salvage. Is potently inhibited by immucillin A and immucillin ACAP, which are transition state inhibitors. Functionally, catalyzes the hydrolysis of the N-glycosidic bond of all of the commonly occurring purine and pyrimidine nucleosides into ribose and the associated base, but has a preference for inosine and uridine as substrates. Likely functions in purine salvage from the host, a fundamental pathway since protozoan parasites such as L.major are incapable of de novo purine biosynthesis. This Leishmania major protein is Inosine-uridine preferring nucleoside hydrolase (NSNH).